The primary structure comprises 278 residues: Undecaprenyl-diphosphatase 1 (278 aa).

7 helical membrane-spanning segments follow: residues valine 46 to phenylalanine 66, tyrosine 91 to alanine 111, leucine 119 to alanine 139, serine 153 to phenylalanine 173, valine 191 to tyrosine 211, proline 225 to leucine 245, and phenylalanine 256 to isoleucine 276.

This sequence belongs to the UppP family.

It is found in the cell membrane. The catalysed reaction is di-trans,octa-cis-undecaprenyl diphosphate + H2O = di-trans,octa-cis-undecaprenyl phosphate + phosphate + H(+). In terms of biological role, catalyzes the dephosphorylation of undecaprenyl diphosphate (UPP). Confers resistance to bacitracin. This is Undecaprenyl-diphosphatase 1 from Frankia alni (strain DSM 45986 / CECT 9034 / ACN14a).